The sequence spans 804 residues: Lon protease 2 (804 aa).

The Lon N-terminal domain occupies 6 to 199 (MPVCPVRGSV…AVLVLLEAEL (194 aa)). 362–369 (GPPGVGKT) is a binding site for ATP. The Lon proteolytic domain occupies 598-779 (EPQVGVATGM…DQVLDLALVG (182 aa)). Active-site residues include S685 and K728.

Belongs to the peptidase S16 family. In terms of assembly, homohexamer. Organized in a ring with a central cavity.

It localises to the cytoplasm. It catalyses the reaction Hydrolysis of proteins in presence of ATP.. ATP-dependent serine protease that mediates the selective degradation of mutant and abnormal proteins as well as certain short-lived regulatory proteins. Required for cellular homeostasis and for survival from DNA damage and developmental changes induced by stress. Degrades polypeptides processively to yield small peptide fragments that are 5 to 10 amino acids long. Binds to DNA in a double-stranded, site-specific manner. The sequence is that of Lon protease 2 from Thermus thermophilus (strain ATCC BAA-163 / DSM 7039 / HB27).